We begin with the raw amino-acid sequence, 732 residues long: Zinc-exporting P-type ATPase (732 aa).

The 68-residue stretch at 29–96 folds into the HMA domain; sequence GRMRVRADWV…AIGGAKHVAA (68 aa). 6 helical membrane passes run 105–123, 146–164, 172–186, 195–209, 342–366, and 372–390; these read HSTE…GGAA, MVAT…RGAL, AGTD…IASL, LTVL…YLQD, VGEN…LVTG, and MTML…TPTA. The active-site 4-aspartylphosphate intermediate is D423. The Mg(2+) site is built by D423, T425, and D625. 2 consecutive transmembrane segments (helical) span residues 676–695 and 705–724; these read AVDV…AAGL and PVLA…ANSS.

The protein belongs to the cation transport ATPase (P-type) (TC 3.A.3) family. Type IB subfamily.

The protein resides in the cell membrane. It catalyses the reaction Zn(2+)(in) + ATP + H2O = Zn(2+)(out) + ADP + phosphate + H(+). Its function is as follows. Zn(2+) efflux transporter which is involved in detoxification of zinc during infection. The polypeptide is Zinc-exporting P-type ATPase (Mycobacterium marinum (strain ATCC BAA-535 / M)).